A 545-amino-acid chain; its full sequence is Chaperonin GroEL 3 (545 aa).

ATP contacts are provided by residues 30–33, lysine 51, 87–91, glycine 415, and aspartate 496; these read TLGP and DGTTT.

Belongs to the chaperonin (HSP60) family. In terms of assembly, forms a cylinder of 14 subunits composed of two heptameric rings stacked back-to-back. Interacts with the co-chaperonin GroES.

It localises to the cytoplasm. It catalyses the reaction ATP + H2O + a folded polypeptide = ADP + phosphate + an unfolded polypeptide.. Together with its co-chaperonin GroES, plays an essential role in assisting protein folding. The GroEL-GroES system forms a nano-cage that allows encapsulation of the non-native substrate proteins and provides a physical environment optimized to promote and accelerate protein folding. This chain is Chaperonin GroEL 3, found in Nitrobacter hamburgensis (strain DSM 10229 / NCIMB 13809 / X14).